We begin with the raw amino-acid sequence, 275 residues long: Phosphite transport system permease protein PtxC (275 aa).

Helical transmembrane passes span 30 to 50, 88 to 108, 136 to 156, 221 to 241, and 249 to 269; these read LGQVAIVFGVVLLACWYVGLL, LAMSIAGTAIAVVFSLVVAFV, LIMGIIFVAAVGFGALPGVLA, ASTVMGMVGAGGIGFELMGSL, and VAAILLVILAMVTLVDAFSGV. Positions 84–267 constitute an ABC transmembrane type-1 domain; sequence LIDTLAMSIA…AMVTLVDAFS (184 aa).

The protein belongs to the binding-protein-dependent transport system permease family.

The protein localises to the cell inner membrane. In terms of biological role, probably forms part of a binding-protein-dependent phosphite transporter. Probably responsible for the translocation of the substrate across the membrane. This chain is Phosphite transport system permease protein PtxC (ptxC), found in Stutzerimonas stutzeri (Pseudomonas stutzeri).